A 172-amino-acid polypeptide reads, in one-letter code: Capsid protein (172 aa).

Residues 1-26 (MASKWNWSGTKGRRTPRRPYGRPYKS) are disordered. Positions 11 to 20 (KGRRTPRRPY) are enriched in basic residues.

This sequence belongs to the nanoviridae capsid protein family.

The protein localises to the virion. The sequence is that of Capsid protein (DNA-S) from Faba bean necrotic yellows virus (isolate Egyptian EV1-93) (FBNYV).